A 38-amino-acid chain; its full sequence is Photosystem II reaction center protein M (38 aa).

The helical transmembrane segment at 5–25 (ILGLIATALFIVIPTSFLLIL) threads the bilayer.

This sequence belongs to the PsbM family. In terms of assembly, PSII is composed of 1 copy each of membrane proteins PsbA, PsbB, PsbC, PsbD, PsbE, PsbF, PsbH, PsbI, PsbJ, PsbK, PsbL, PsbM, PsbT, PsbX, PsbY, PsbZ, Psb30/Ycf12, at least 3 peripheral proteins of the oxygen-evolving complex and a large number of cofactors. It forms dimeric complexes.

Its subcellular location is the plastid. The protein resides in the cyanelle thylakoid membrane. Functionally, one of the components of the core complex of photosystem II (PSII). PSII is a light-driven water:plastoquinone oxidoreductase that uses light energy to abstract electrons from H(2)O, generating O(2) and a proton gradient subsequently used for ATP formation. It consists of a core antenna complex that captures photons, and an electron transfer chain that converts photonic excitation into a charge separation. This subunit is found at the monomer-monomer interface. The polypeptide is Photosystem II reaction center protein M (Cyanophora paradoxa).